Here is a 128-residue protein sequence, read N- to C-terminus: Cystatin-2 (128 aa).

Positions 1–19 (MSSFKVAVLLIAVYGASQG) are cleaved as a signal peptide. The Cystatin domain occupies 29–116 (QDPTEARFLE…CVAVIYHVPW (88 aa)). Cystine bridges form between C84-C96 and C107-C127.

This sequence belongs to the cystatin family. Widely expressed. Detected in salivary glands (at protein level), gut (at protein level), ovaries, and Malpighian tubules.

The protein localises to the secreted. Its function is as follows. Inhibitor of cysteine proteinases with broad specificity for mammalian cathepsins, including endopeptidases (cathepsins L and S) and exopeptidases (cathepsins B, C and H). Also inhibits endogenous cathepsin B-like and cathepsin C-like proteinases. Does not inhibit human legumain. May mimic specific host-derived cystatin(s) to interfere with its/their function in controlling cathepsin-mediated proteolysis. Affects the function of antigen-presenting mouse dendritic cells by reducing the production of the pro-inflammatory cytokines TNF and interleukin-12, and proliferation of antigen-specific CD4+ T-cells, suggesting it may suppress the host adaptive immune response. It is noteworthy that immunization of mice with this protein reduces O.moubata survival in infestation experiments. The chain is Cystatin-2 from Ornithodoros moubata (Soft tick).